We begin with the raw amino-acid sequence, 468 residues long: Soluble pyridine nucleotide transhydrogenase (468 aa).

Residue 36–45 coordinates FAD; that stretch reads ERYKNVGGGC.

The protein belongs to the class-I pyridine nucleotide-disulfide oxidoreductase family. The cofactor is FAD.

The protein localises to the cytoplasm. The enzyme catalyses NAD(+) + NADPH = NADH + NADP(+). Conversion of NADPH, generated by peripheral catabolic pathways, to NADH, which can enter the respiratory chain for energy generation. This chain is Soluble pyridine nucleotide transhydrogenase, found in Hamiltonella defensa subsp. Acyrthosiphon pisum (strain 5AT).